The primary structure comprises 546 residues: MDNQRLILFIVFSFSLLLLWEAWQDKQAPAPATRPVAGAPAGSAAPTPSTALNAPAAAPAQTGFAKGARAVVETDVLRATIDANGGDLRELQLLGYRETEDKNRVFTLFEDSRTRPYLAQSGFVGGGLPTHRSTFELTPGTYRLTGGAARLEVPLVWNDAARGVRVEKTFIFTRGSHEVAVRTRVVNRGKEPLDLTPYYQFTRHGEAPRGESFFLYTYTGPAFYTDAKKFQKVPFTDIQDGSAEFEKTATNGWVGLVQHHFVAAWLPEESVKREYYARSLGEGLYSAGVILAEGQLAPGQQKTFTVPLYAGPQSQAVLEKAAPGLDLARDYGWLTPLAYPIFWSLEKIERLVGNWGWAIIILTILIKLALYPLSAAGYKSMAKMKKLTPRLQQLKETYGDDRAKLHQAMAEMYKTEKINPLGGCLPILIQIPVFIALYWVLLAAVEMRGAPWLGWITDLTAPDPWYILPIIMGVTSILQVKLNPQPMDPMQAKIMMIMPVAFTVMFVFFPAGLVLYWVVNNILSIAQQWAINKQVEGSGKPAPAKT.

The chain crosses the membrane as a helical span at residues 6–26 (LILFIVFSFSLLLLWEAWQDK). A disordered region spans residues 31–56 (PATRPVAGAPAGSAAPTPSTALNAPA). Positions 37–56 (AGAPAGSAAPTPSTALNAPA) are enriched in low complexity. The next 4 membrane-spanning stretches (helical) occupy residues 351–371 (LVGN…LALY), 425–445 (LPIL…LAAV), 465–482 (WYIL…QVKL), and 494–514 (IMMI…AGLV).

The protein belongs to the OXA1/ALB3/YidC family. Type 1 subfamily. In terms of assembly, interacts with the Sec translocase complex via SecD. Specifically interacts with transmembrane segments of nascent integral membrane proteins during membrane integration.

The protein resides in the cell inner membrane. In terms of biological role, required for the insertion and/or proper folding and/or complex formation of integral membrane proteins into the membrane. Involved in integration of membrane proteins that insert both dependently and independently of the Sec translocase complex, as well as at least some lipoproteins. Aids folding of multispanning membrane proteins. In Thiobacillus denitrificans (strain ATCC 25259 / T1), this protein is Membrane protein insertase YidC.